A 333-amino-acid polypeptide reads, in one-letter code: Trans-1,2-dihydrobenzene-1,2-diol dehydrogenase (333 aa).

It belongs to the Gfo/Idh/MocA family. In terms of assembly, homodimer.

It catalyses the reaction (1R,2R)-1,2-dihydrobenzene-1,2-diol + NADP(+) = catechol + NADPH + H(+). The catalysed reaction is D-xylose + NADP(+) = D-xylono-1,5-lactone + NADPH + H(+). The protein is Trans-1,2-dihydrobenzene-1,2-diol dehydrogenase (Dhdh) of Mus musculus (Mouse).